The sequence spans 245 residues: tRNA pseudouridine synthase A (245 aa).

The Nucleophile role is filled by aspartate 52. Position 111 (tyrosine 111) interacts with substrate.

This sequence belongs to the tRNA pseudouridine synthase TruA family. In terms of assembly, homodimer.

The enzyme catalyses uridine(38/39/40) in tRNA = pseudouridine(38/39/40) in tRNA. Functionally, formation of pseudouridine at positions 38, 39 and 40 in the anticodon stem and loop of transfer RNAs. The sequence is that of tRNA pseudouridine synthase A from Zymomonas mobilis subsp. mobilis (strain ATCC 31821 / ZM4 / CP4).